A 149-amino-acid polypeptide reads, in one-letter code: Large ribosomal subunit protein uL15 (149 aa).

Residues 1-11 (MSDPIKLHDLR) are compositionally biased toward basic and acidic residues. The segment at 1–44 (MSDPIKLHDLRPAPGAKKAKTRVGRGEASKGKTAGRGTKGTKAR) is disordered.

It belongs to the universal ribosomal protein uL15 family. Part of the 50S ribosomal subunit.

Binds to the 23S rRNA. This chain is Large ribosomal subunit protein uL15, found in Corynebacterium jeikeium (strain K411).